A 245-amino-acid chain; its full sequence is Acyl-protein thioesterase 1 (245 aa).

Residues Ser-126, Asp-182, and His-214 each act as charge relay system in the active site.

The protein belongs to the AB hydrolase superfamily. AB hydrolase 2 family.

It is found in the cytoplasm. Its subcellular location is the nucleus. It carries out the reaction S-hexadecanoyl-L-cysteinyl-[protein] + H2O = L-cysteinyl-[protein] + hexadecanoate + H(+). Functionally, hydrolyzes fatty acids from S-acylated cysteine residues in proteins with a strong preference for palmitoylated G-alpha proteins over other acyl substrates. Mediates the deacylation of G-alpha proteins such as GPA1 in vivo, but has weak or no activity toward palmitoylated Ras proteins. Has weak lysophospholipase activity in vitro; however such activity may not exist in vivo. The sequence is that of Acyl-protein thioesterase 1 from Neurospora crassa (strain ATCC 24698 / 74-OR23-1A / CBS 708.71 / DSM 1257 / FGSC 987).